The sequence spans 205 residues: Recombination protein RecR (205 aa).

The C4-type zinc-finger motif lies at 60 to 75; it reads CKVCHNISDTETCQIC. Positions 83-178 constitute a Toprim domain; sequence SMVCVVENIR…KLSVLARGVS (96 aa).

It belongs to the RecR family.

May play a role in DNA repair. It seems to be involved in an RecBC-independent recombinational process of DNA repair. It may act with RecF and RecO. The sequence is that of Recombination protein RecR from Bacteroides fragilis (strain ATCC 25285 / DSM 2151 / CCUG 4856 / JCM 11019 / LMG 10263 / NCTC 9343 / Onslow / VPI 2553 / EN-2).